Consider the following 660-residue polypeptide: MKTVVFAYHDMGCLGIEALLAAGYEISAIFTHTDNPGEKAFYGSVARLAAERGIPVYAPDDVNHPLWVERIAQLSPDVIFSFYYRHLIHDKILQLAPAGAFNLHGSLLPKYRGRAPLNWVLVNGETETGVTLHRMVKRADAGAIVAQLRIAIAPDDIAITLHHKLCHAARQLLEQTLPAIKDGNILEIAQCENEATCFGRRTPEDSFLEWHKSAAVLHNMVRAVADPWPGAFSYVGNQKFTVWSSRVHSHAPAAQPGSVISVAPLLIACGDGALEIVTGQAGGGITMQGSQLAQTLGLVQGSRLNSQPACAARRRTRVLILGVNGFIGNHLTERLLREDHYEVYGLDIGSDAISRFLNHPHFHFVEGDISIHSEWIEYHVKKCDVVLPLVAIATPIEYTRNPLRVFELDFEENLRIIRYCVKYRKRIIFPSTSEVYGMCSDKYFDEDHSNLIVGPVNKPRWIYSVSKQLLDRVIWAYGEKEGLQFTLFRPFNWMGPRLDNLNAARIGSSRAITQLILNLVEGSPIKLIDGGKQKRCFTDIRDGIEALYRIIENAGNRCDGEIINIGNPENEASIEELGEMLLASFEKHPLRHYFPPFAGFRVVESSSYYGKGYQDVEHRKPSIRNARRCLDWEPKIDMQETIDETLDFFLRTVDLTDKPS.

Positions 1–304 are formyltransferase ArnAFT; sequence MKTVVFAYHD…TLGLVQGSRL (304 aa). 86 to 88 contacts (6R)-10-formyltetrahydrofolate; it reads HLI. His-104 functions as the Proton donor; for formyltransferase activity in the catalytic mechanism. (6R)-10-formyltetrahydrofolate contacts are provided by residues Arg-114 and 136–140; that span reads VKRAD. The dehydrogenase ArnADH stretch occupies residues 314 to 660; it reads RRTRVLILGV…RTVDLTDKPS (347 aa). Residues Asp-347 and 368–369 contribute to the NAD(+) site; that span reads DI. UDP-alpha-D-glucuronate-binding positions include Ala-393, Tyr-398, and 432–433; that span reads TS. Residue Glu-434 is the Proton acceptor; for decarboxylase activity of the active site. UDP-alpha-D-glucuronate is bound by residues Arg-460, Asn-492, 526–535, and Tyr-613; that span reads KLIDGGKQKR. The active-site Proton donor; for decarboxylase activity is Arg-619.

It in the N-terminal section; belongs to the Fmt family. UDP-L-Ara4N formyltransferase subfamily. In the C-terminal section; belongs to the NAD(P)-dependent epimerase/dehydratase family. UDP-glucuronic acid decarboxylase subfamily. In terms of assembly, homohexamer, formed by a dimer of trimers.

It catalyses the reaction UDP-alpha-D-glucuronate + NAD(+) = UDP-beta-L-threo-pentopyranos-4-ulose + CO2 + NADH. The catalysed reaction is UDP-4-amino-4-deoxy-beta-L-arabinose + (6R)-10-formyltetrahydrofolate = UDP-4-deoxy-4-formamido-beta-L-arabinose + (6S)-5,6,7,8-tetrahydrofolate + H(+). It participates in nucleotide-sugar biosynthesis; UDP-4-deoxy-4-formamido-beta-L-arabinose biosynthesis; UDP-4-deoxy-4-formamido-beta-L-arabinose from UDP-alpha-D-glucuronate: step 1/3. The protein operates within nucleotide-sugar biosynthesis; UDP-4-deoxy-4-formamido-beta-L-arabinose biosynthesis; UDP-4-deoxy-4-formamido-beta-L-arabinose from UDP-alpha-D-glucuronate: step 3/3. Its pathway is bacterial outer membrane biogenesis; lipopolysaccharide biosynthesis. Functionally, bifunctional enzyme that catalyzes the oxidative decarboxylation of UDP-glucuronic acid (UDP-GlcUA) to UDP-4-keto-arabinose (UDP-Ara4O) and the addition of a formyl group to UDP-4-amino-4-deoxy-L-arabinose (UDP-L-Ara4N) to form UDP-L-4-formamido-arabinose (UDP-L-Ara4FN). The modified arabinose is attached to lipid A and is required for resistance to polymyxin and cationic antimicrobial peptides. This Escherichia coli (strain SMS-3-5 / SECEC) protein is Bifunctional polymyxin resistance protein ArnA.